Here is a 906-residue protein sequence, read N- to C-terminus: Protein translocase subunit SecA (906 aa).

Residues Gln86, Gly104–Thr108, and Asp511 contribute to the ATP site. Composition is skewed to basic and acidic residues over residues His853–Glu865 and Val877–Asp888. The disordered stretch occupies residues His853–Glu906. Zn(2+)-binding residues include Cys890, Cys892, Cys901, and His902. Positions Lys896 to Glu906 are enriched in basic residues.

This sequence belongs to the SecA family. As to quaternary structure, monomer and homodimer. Part of the essential Sec protein translocation apparatus which comprises SecA, SecYEG and auxiliary proteins SecDF-YajC and YidC. Requires Zn(2+) as cofactor.

Its subcellular location is the cell inner membrane. The protein localises to the cytoplasm. It catalyses the reaction ATP + H2O + cellular proteinSide 1 = ADP + phosphate + cellular proteinSide 2.. Part of the Sec protein translocase complex. Interacts with the SecYEG preprotein conducting channel. Has a central role in coupling the hydrolysis of ATP to the transfer of proteins into and across the cell membrane, serving both as a receptor for the preprotein-SecB complex and as an ATP-driven molecular motor driving the stepwise translocation of polypeptide chains across the membrane. The sequence is that of Protein translocase subunit SecA from Francisella tularensis subsp. holarctica (strain OSU18).